Consider the following 320-residue polypeptide: Malate dehydrogenase (320 aa).

NAD(+)-binding positions include 10–15 (GSGMIG) and Asp34. 2 residues coordinate substrate: Arg83 and Arg89. Residues Asn96 and 119–121 (ITN) contribute to the NAD(+) site. Substrate contacts are provided by Asn121 and Arg152. The Proton acceptor role is filled by His176.

This sequence belongs to the LDH/MDH superfamily. MDH type 3 family.

It carries out the reaction (S)-malate + NAD(+) = oxaloacetate + NADH + H(+). In terms of biological role, catalyzes the reversible oxidation of malate to oxaloacetate. The protein is Malate dehydrogenase of Agrobacterium fabrum (strain C58 / ATCC 33970) (Agrobacterium tumefaciens (strain C58)).